Reading from the N-terminus, the 122-residue chain is Large ribosomal subunit protein uL14 (122 aa).

It belongs to the universal ribosomal protein uL14 family. Part of the 50S ribosomal subunit. Forms a cluster with proteins L3 and L19. In the 70S ribosome, L14 and L19 interact and together make contacts with the 16S rRNA in bridges B5 and B8.

Its function is as follows. Binds to 23S rRNA. Forms part of two intersubunit bridges in the 70S ribosome. This Shouchella clausii (strain KSM-K16) (Alkalihalobacillus clausii) protein is Large ribosomal subunit protein uL14.